The following is a 94-amino-acid chain: MTKSELMEKLSAKQPTLPAKEIENMVKGILEFISQSLENGDRVEVRGFGSFSLHHRQPRLGRNPKTGDSVNLSAKSVPYFKAGKELKARVDVQA.

It belongs to the bacterial histone-like protein family. As to quaternary structure, heterodimer of an alpha and a beta chain.

Its function is as follows. This protein is one of the two subunits of integration host factor, a specific DNA-binding protein that functions in genetic recombination as well as in transcriptional and translational control. The sequence is that of Integration host factor subunit beta (ihfB) from Haemophilus influenzae (strain ATCC 51907 / DSM 11121 / KW20 / Rd).